Reading from the N-terminus, the 107-residue chain is Ig kappa chain V-VI region NQ6-8.3.1 (107 aa).

Residues 1–23 (QIVLTQSPAIMSASPGQKVTMTC) are framework-1. A disulfide bridge connects residues Cys23 and Cys87. Positions 24–33 (SASSSVSYMH) are complementarity-determining-1. The segment at 34–48 (WYQQKSGTSPKRWIY) is framework-2. The interval 49–55 (DTSKLAS) is complementarity-determining-2. The segment at 56–87 (GXPARFSGSGSATSYSLTITSMQAEDAATYYC) is framework-3. The tract at residues 88 to 96 (QQWSSNPLT) is complementarity-determining-3. Residues 97–106 (FGAGTKLELK) are framework-4.

Its function is as follows. Anti-2-phenyl oxazolone (PHOX) Antibody. The chain is Ig kappa chain V-VI region NQ6-8.3.1 from Mus musculus (Mouse).